Consider the following 402-residue polypeptide: Glutamate N-acetyltransferase (402 aa).

Residues Thr-151, Lys-178, Thr-189, Glu-267, Asn-397, and Thr-402 each coordinate substrate. The active-site Nucleophile is the Thr-189.

This sequence belongs to the ArgJ family. As to quaternary structure, heterotetramer of two alpha and two beta chains.

The protein localises to the cytoplasm. The enzyme catalyses N(2)-acetyl-L-ornithine + L-glutamate = N-acetyl-L-glutamate + L-ornithine. It participates in amino-acid biosynthesis; L-arginine biosynthesis; L-ornithine and N-acetyl-L-glutamate from L-glutamate and N(2)-acetyl-L-ornithine (cyclic): step 1/1. Functionally, catalyzes the transfer of the acetyl group from N(2)-acetylornithine to glutamate, forming N-acetylglutamate and L-ornithine. This chain is Glutamate N-acetyltransferase, found in Methanothermobacter thermautotrophicus (strain ATCC 29096 / DSM 1053 / JCM 10044 / NBRC 100330 / Delta H) (Methanobacterium thermoautotrophicum).